The chain runs to 569 residues: MIKISRKQYASMYGPTTGDKVRLGDTNLFAEIEKDYTLYGEEIKFGGGKTIRDGMAQSASTYTNELDAVITNAMIIDYTGIYKADIGIKGGKIVGIGKAGNPDTQDSVNEAMVVGAATEVIAGEGQIITAGGIDTHIHFISPTQIPTALYSGVTTMIGGGTGPAAGTNATTCTPGKWNMHQMLRAAESYAMNLGFFGKGNSSNEEGLEEQIKAGALGLKVHEDWGSTPAAINHALNVAQKYDVQVAIHTDTLNEAGCVEDTMKAIDGRTIHTFHTEGAGGGHAPDIIKAAGEPNILPASTNPTIPFTKNTADEHLDMLMVCHHLDKKIKEDVAFADSRIRPETIAAEDTLHDMGIFSITSSDSQAMGRVGEVITRTWQTADKCKNEFGALKEECGENDNFRIKRYISKYTINPAIAHGISEYVGSVEVGKFADLVLWKPSMFGIKPEMILKNGMIVAAKIGDSNASIPTPEPVVYAPMFGSYGKAKYNCAITFVSKIAYDCHIKEELGLERILLPVKNCRNITKKDMKFNDVITPIEVNPETYEVRVNNTKITSKPVEKVSLGQLYCLF.

The region spanning 131 to 569 (GGIDTHIHFI…VSLGQLYCLF (439 aa)) is the Urease domain. Ni(2+)-binding residues include histidine 136, histidine 138, and lysine 219. Lysine 219 is modified (N6-carboxylysine). Histidine 221 provides a ligand contact to substrate. Residues histidine 248 and histidine 274 each contribute to the Ni(2+) site. Histidine 322 acts as the Proton donor in catalysis. Aspartate 362 contributes to the Ni(2+) binding site.

This sequence belongs to the metallo-dependent hydrolases superfamily. Urease alpha subunit family. In terms of assembly, heterohexamer of 3 UreA (alpha) and 3 UreB (beta) subunits. The cofactor is Ni cation. In terms of processing, carboxylation allows a single lysine to coordinate two nickel ions.

The protein resides in the cytoplasm. The enzyme catalyses urea + 2 H2O + H(+) = hydrogencarbonate + 2 NH4(+). It participates in nitrogen metabolism; urea degradation; CO(2) and NH(3) from urea (urease route): step 1/1. This Helicobacter hepaticus (strain ATCC 51449 / 3B1) protein is Urease subunit beta.